The following is a 288-amino-acid chain: Bifunctional protein FolD (288 aa).

NADP(+)-binding positions include G166–S168, S191, and I232.

The protein belongs to the tetrahydrofolate dehydrogenase/cyclohydrolase family. In terms of assembly, homodimer.

The enzyme catalyses (6R)-5,10-methylene-5,6,7,8-tetrahydrofolate + NADP(+) = (6R)-5,10-methenyltetrahydrofolate + NADPH. It carries out the reaction (6R)-5,10-methenyltetrahydrofolate + H2O = (6R)-10-formyltetrahydrofolate + H(+). The protein operates within one-carbon metabolism; tetrahydrofolate interconversion. Catalyzes the oxidation of 5,10-methylenetetrahydrofolate to 5,10-methenyltetrahydrofolate and then the hydrolysis of 5,10-methenyltetrahydrofolate to 10-formyltetrahydrofolate. The sequence is that of Bifunctional protein FolD from Rickettsia rickettsii (strain Iowa).